Consider the following 364-residue polypeptide: Mannose-1-phosphate guanyltransferase (364 aa).

The protein belongs to the transferase hexapeptide repeat family.

It localises to the cytoplasm. It catalyses the reaction alpha-D-mannose 1-phosphate + GTP + H(+) = GDP-alpha-D-mannose + diphosphate. It functions in the pathway nucleotide-sugar biosynthesis; GDP-alpha-D-mannose biosynthesis; GDP-alpha-D-mannose from alpha-D-mannose 1-phosphate (GTP route): step 1/1. Functionally, involved in cell wall synthesis where it is required for glycosylation. Involved in cell cycle progression through cell-size checkpoint. This is Mannose-1-phosphate guanyltransferase (mpg-1) from Neurospora crassa (strain ATCC 24698 / 74-OR23-1A / CBS 708.71 / DSM 1257 / FGSC 987).